Reading from the N-terminus, the 145-residue chain is 3-dehydroquinate dehydratase (145 aa).

Tyrosine 22 functions as the Proton acceptor in the catalytic mechanism. Substrate is bound by residues asparagine 71, histidine 77, and aspartate 84. The active-site Proton donor is the histidine 97. Substrate contacts are provided by residues 98–99 (IS) and arginine 108.

This sequence belongs to the type-II 3-dehydroquinase family. Homododecamer.

The catalysed reaction is 3-dehydroquinate = 3-dehydroshikimate + H2O. The protein operates within metabolic intermediate biosynthesis; chorismate biosynthesis; chorismate from D-erythrose 4-phosphate and phosphoenolpyruvate: step 3/7. In terms of biological role, catalyzes a trans-dehydration via an enolate intermediate. The polypeptide is 3-dehydroquinate dehydratase (Thermotoga neapolitana (strain ATCC 49049 / DSM 4359 / NBRC 107923 / NS-E)).